We begin with the raw amino-acid sequence, 460 residues long: Trigger factor (460 aa).

The region spanning 166 to 245 is the PPIase FKBP-type domain; that stretch reads DDFLTIDITA…VKAVKERELP (80 aa). The interval 434–460 is disordered; sequence AAEEAAAGEANEEADVVASDDPAAVKF. Residues 449–460 show a composition bias toward low complexity; it reads VVASDDPAAVKF.

It belongs to the FKBP-type PPIase family. Tig subfamily.

The protein localises to the cytoplasm. The enzyme catalyses [protein]-peptidylproline (omega=180) = [protein]-peptidylproline (omega=0). Functionally, involved in protein export. Acts as a chaperone by maintaining the newly synthesized protein in an open conformation. Functions as a peptidyl-prolyl cis-trans isomerase. This chain is Trigger factor, found in Paenarthrobacter aurescens (strain TC1).